We begin with the raw amino-acid sequence, 231 residues long: Homeobox protein engrailed-1a (231 aa).

3 disordered regions span residues 1–29 (MEDQ…AHRN), 43–105 (GCKR…KDSQ), and 121–148 (DRPS…RPRT). Residues 43-56 (GCKRERERVTRDSG) are compositionally biased toward basic and acidic residues. Residues 68–102 (DGVSSSASSTVSSPVSSRQSNKVEQGSSKSSSPSK) are compositionally biased toward low complexity. Residues 143-202 (DKRPRTAFTAEQLQRLKAEFQTSRYITEQRRQALARELGLNESQIKIWFQNKRAKIKKSS) constitute a DNA-binding region (homeobox).

This sequence belongs to the engrailed homeobox family.

It is found in the nucleus. The polypeptide is Homeobox protein engrailed-1a (eng1a) (Danio rerio (Zebrafish)).